Here is a 333-residue protein sequence, read N- to C-terminus: C4-dicarboxylate-binding periplasmic protein DctP (333 aa).

Residues 1 to 26 (MLTRRILGALVGATALSLALSVPALA) form the signal peptide.

The protein belongs to the bacterial solute-binding protein 7 family. In terms of assembly, the complex comprises the extracytoplasmic solute receptor protein DctP, and the two transmembrane proteins DctQ and DctM.

The protein resides in the periplasm. In terms of biological role, part of the tripartite ATP-independent periplasmic (TRAP) transport system DctPQM involved in C4-dicarboxylates uptake. Binds C4-dicarboxylates such as fumarate, succinate, L-malate and D-malate. This is C4-dicarboxylate-binding periplasmic protein DctP from Rhodobacter capsulatus (Rhodopseudomonas capsulata).